Consider the following 284-residue polypeptide: Large ribosomal subunit protein uL2 (284 aa).

A disordered region spans residues 232 to 284; the sequence is RGTAMNPVDHPHGGGEGRHNGYIPRTPWGKVTKGLKTRDKRKSNKWIVKDRRK. The span at 240–250 shows a compositional bias: basic and acidic residues; the sequence is DHPHGGGEGRH. A compositionally biased stretch (basic residues) spans 264–284; that stretch reads KGLKTRDKRKSNKWIVKDRRK.

Belongs to the universal ribosomal protein uL2 family. Part of the 50S ribosomal subunit. Forms a bridge to the 30S subunit in the 70S ribosome.

Its function is as follows. One of the primary rRNA binding proteins. Required for association of the 30S and 50S subunits to form the 70S ribosome, for tRNA binding and peptide bond formation. It has been suggested to have peptidyltransferase activity; this is somewhat controversial. Makes several contacts with the 16S rRNA in the 70S ribosome. The protein is Large ribosomal subunit protein uL2 of Chlamydia abortus (strain DSM 27085 / S26/3) (Chlamydophila abortus).